A 363-amino-acid chain; its full sequence is SWIRM domain-containing protein YOR338W (363 aa).

2 disordered regions span residues 1–22 (MLDNMQFHSPAPEHPQLNGGIN) and 186–208 (LYEDDGNRSENYDEESAQEVPVR). The segment covering 186–196 (LYEDDGNRSEN) has biased composition (basic and acidic residues). An SWIRM domain is found at 266–363 (LKVEWKGSPM…LQDKHFEKYL (98 aa)).

The chain is SWIRM domain-containing protein YOR338W from Saccharomyces cerevisiae (strain ATCC 204508 / S288c) (Baker's yeast).